The following is a 203-amino-acid chain: Endo-type membrane-bound lytic murein transglycosylase A (203 aa).

An N-terminal signal peptide occupies residues 1–15 (MKLRWLLILVVFLAG). Residue Cys16 is the site of N-palmitoyl cysteine attachment. Cys16 carries S-diacylglycerol cysteine lipidation.

Belongs to the transglycosylase Slt family.

The protein resides in the cell outer membrane. It carries out the reaction Endolytic cleavage of the (1-&gt;4)-beta-glycosidic linkage between N-acetylmuramic acid (MurNAc) and N-acetylglucosamine (GlcNAc) residues in peptidoglycan with concomitant formation of a 1,6-anhydrobond in the MurNAc residue.. Its function is as follows. Murein-degrading enzyme. May play a role in recycling of muropeptides during cell elongation and/or cell division. Preferentially cleaves at a distance of more than two disaccharide units from the ends of the glycan chain. The sequence is that of Endo-type membrane-bound lytic murein transglycosylase A from Klebsiella pneumoniae (strain 342).